A 334-amino-acid chain; its full sequence is Porphobilinogen deaminase (334 aa).

At Cys-258 the chain carries S-(dipyrrolylmethanemethyl)cysteine.

Belongs to the HMBS family. As to quaternary structure, monomer. Requires dipyrromethane as cofactor.

It catalyses the reaction 4 porphobilinogen + H2O = hydroxymethylbilane + 4 NH4(+). It functions in the pathway porphyrin-containing compound metabolism; protoporphyrin-IX biosynthesis; coproporphyrinogen-III from 5-aminolevulinate: step 2/4. Functionally, tetrapolymerization of the monopyrrole PBG into the hydroxymethylbilane pre-uroporphyrinogen in several discrete steps. The polypeptide is Porphobilinogen deaminase (Ralstonia nicotianae (strain ATCC BAA-1114 / GMI1000) (Ralstonia solanacearum)).